A 200-amino-acid polypeptide reads, in one-letter code: uncharacterized protein (200 aa).

Residues 149-200 (APDPGGSVATEEVLRSDDRDSHTQDSASEWPEGNDSVGSAAMRIDLSRIGGT) are disordered. Basic and acidic residues predominate over residues 160–171 (EVLRSDDRDSHT).

The protein to A.tumefaciens Ti plasmid conjugal transfer region I ORFR2 and ORFR3.

This is an uncharacterized protein from Sinorhizobium fredii (strain NBRC 101917 / NGR234).